The sequence spans 375 residues: 23S rRNA (uracil(747)-C(5))-methyltransferase RlmC (375 aa).

[4Fe-4S] cluster-binding residues include C3, C11, C14, and C87. 4 residues coordinate S-adenosyl-L-methionine: Q212, F241, E262, and N307. Residue C334 is the Nucleophile of the active site.

Belongs to the class I-like SAM-binding methyltransferase superfamily. RNA M5U methyltransferase family. RlmC subfamily.

The enzyme catalyses uridine(747) in 23S rRNA + S-adenosyl-L-methionine = 5-methyluridine(747) in 23S rRNA + S-adenosyl-L-homocysteine + H(+). In terms of biological role, catalyzes the formation of 5-methyl-uridine at position 747 (m5U747) in 23S rRNA. This is 23S rRNA (uracil(747)-C(5))-methyltransferase RlmC from Xenorhabdus nematophila (strain ATCC 19061 / DSM 3370 / CCUG 14189 / LMG 1036 / NCIMB 9965 / AN6).